Here is a 370-residue protein sequence, read N- to C-terminus: DnaJ homolog subfamily B member 12 (370 aa).

M1 is subject to N-acetylmethionine. The segment at 51 to 92 (NQKPQPAGDQPQPTEATHTTHRKAAGANTASANGEAGGESTK) is disordered. Residues 110–174 (DYYEILGVSR…EKRKQYDQFG (65 aa)) enclose the J domain. H185 carries the post-translational modification Pros-methylhistidine. Residues 242 to 262 (GGLGVFVQLMPILILILVSAL) traverse the membrane as a helical segment.

It belongs to the DnaJ family. DNAJB12/DNAJB14 subfamily. In terms of assembly, homodimer and homotetramer. Interacts (via J domain) with HSPA8/Hsc70. Forms a multiprotein complex, at least composed of DNAJB12, DNAJB14, HSPA8/Hsc70 and SGTA; interaction with DNAJB14 and HSPA8/Hsc70 is direct. In terms of processing, methylated at His-185 by METTL9.

It is found in the endoplasmic reticulum membrane. The protein localises to the nucleus membrane. In terms of biological role, acts as a co-chaperone with HSPA8/Hsc70; required to promote protein folding and trafficking, prevent aggregation of client proteins, and promote unfolded proteins to endoplasmic reticulum-associated degradation (ERAD) pathway. Acts by determining HSPA8/Hsc70's ATPase and polypeptide-binding activities. Can also act independently of HSPA8/Hsc70: together with DNAJB14, acts as a chaperone that promotes maturation of potassium channels KCND2 and KCNH2 by stabilizing nascent channel subunits and assembling them into tetramers. While stabilization of nascent channel proteins is dependent on HSPA8/Hsc70, the process of oligomerization of channel subunits is independent of HSPA8/Hsc70. When overexpressed, forms membranous structures together with DNAJB14 and HSPA8/Hsc70 within the nucleus; the role of these structures, named DJANGOs, is still unclear. The sequence is that of DnaJ homolog subfamily B member 12 (DNAJB12) from Bos taurus (Bovine).